A 138-amino-acid chain; its full sequence is Basic phospholipase A2 homolog CTs-K49a (138 aa).

Residues methionine 1–glycine 16 form the signal peptide. 6 disulfides stabilise this stretch: cysteine 42/cysteine 131, cysteine 44/cysteine 60, cysteine 59/cysteine 111, cysteine 65/cysteine 138, cysteine 66/cysteine 104, and cysteine 91/cysteine 102. Residues lysine 121–lysine 133 form an important for membrane-damaging activities in eukaryotes and bacteria; heparin-binding region.

This sequence belongs to the phospholipase A2 family. Group II subfamily. K49 sub-subfamily. As to expression, expressed by the venom gland.

It is found in the secreted. Functionally, snake venom phospholipase A2 homolog that lacks catalytic activity. It shows myotoxic and weak anticoagulant activities. A model of myotoxic mechanism has been proposed: an apo Lys49-PLA2 is activated by the entrance of a hydrophobic molecule (e.g. fatty acid) at the hydrophobic channel of the protein leading to a reorientation of a monomer. This reorientation causes a transition between 'inactive' to 'active' states, causing alignment of C-terminal and membrane-docking sites (MDoS) side-by-side and putting the membrane-disruption sites (MDiS) in the same plane, exposed to solvent and in a symmetric position for both monomers. The MDoS region stabilizes the toxin on membrane by the interaction of charged residues with phospholipid head groups. Subsequently, the MDiS region destabilizes the membrane with penetration of hydrophobic residues. This insertion causes a disorganization of the membrane, allowing an uncontrolled influx of ions (i.e. calcium and sodium), and eventually triggering irreversible intracellular alterations and cell death. The polypeptide is Basic phospholipase A2 homolog CTs-K49a (Trimeresurus stejnegeri (Chinese green tree viper)).